A 580-amino-acid chain; its full sequence is Putative monoterpene synthase 8 (580 aa).

The transit peptide at 1–44 (MACTSNLSSLSKSWAVLDVPRGAPKATGLWLKRQFIFKTSRICM) directs the protein to the chloroplast. Asp333, Asp337, Asp478, Thr482, and Glu486 together coordinate Mg(2+). The DDXXD motif motif lies at 333–337 (DDIFD).

It belongs to the terpene synthase family. Tpsg subfamily. In terms of assembly, monomer. Mg(2+) is required as a cofactor. The cofactor is Mn(2+). As to expression, confined to flowers.

It localises to the plastid. The protein resides in the chloroplast. It functions in the pathway secondary metabolite biosynthesis; terpenoid biosynthesis. In terms of biological role, monoterpene synthase (mono-TPS) involved in the biosynthesis of monoterpenes natural products, constituent of coffee beverage aroma. In Coffea arabica (Arabian coffee), this protein is Putative monoterpene synthase 8.